Reading from the N-terminus, the 1243-residue chain is DNA polymerase II large subunit (1243 aa).

It belongs to the archaeal DNA polymerase II family. Heterodimer of a large subunit and a small subunit.

It catalyses the reaction DNA(n) + a 2'-deoxyribonucleoside 5'-triphosphate = DNA(n+1) + diphosphate. The catalysed reaction is Exonucleolytic cleavage in the 3'- to 5'-direction to yield nucleoside 5'-phosphates.. Possesses two activities: a DNA synthesis (polymerase) and an exonucleolytic activity that degrades single-stranded DNA in the 3'- to 5'-direction. Has a template-primer preference which is characteristic of a replicative DNA polymerase. This is DNA polymerase II large subunit from Nanoarchaeum equitans (strain Kin4-M).